The following is a 342-amino-acid chain: S-adenosylmethionine:tRNA ribosyltransferase-isomerase (342 aa).

This sequence belongs to the QueA family. As to quaternary structure, monomer.

Its subcellular location is the cytoplasm. It catalyses the reaction 7-aminomethyl-7-carbaguanosine(34) in tRNA + S-adenosyl-L-methionine = epoxyqueuosine(34) in tRNA + adenine + L-methionine + 2 H(+). It participates in tRNA modification; tRNA-queuosine biosynthesis. Functionally, transfers and isomerizes the ribose moiety from AdoMet to the 7-aminomethyl group of 7-deazaguanine (preQ1-tRNA) to give epoxyqueuosine (oQ-tRNA). The sequence is that of S-adenosylmethionine:tRNA ribosyltransferase-isomerase from Campylobacter jejuni subsp. jejuni serotype O:2 (strain ATCC 700819 / NCTC 11168).